The following is a 103-amino-acid chain: Putative truncated guanine nucleotide exchange factor YLL017W (103 aa).

The SH3 domain occupies 26-97 (QPIDVVECTY…PPSFYTVHSK (72 aa)).

In Saccharomyces cerevisiae (strain ATCC 204508 / S288c) (Baker's yeast), this protein is Putative truncated guanine nucleotide exchange factor YLL017W.